The primary structure comprises 132 residues: Fatty acid-binding protein, adipocyte (132 aa).

The Nuclear localization signal motif lies at K22–K32. The (9Z,12Z)-octadecadienoate site is built by R107 and R127.

The protein belongs to the calycin superfamily. Fatty-acid binding protein (FABP) family. As to quaternary structure, monomer.

It localises to the cytoplasm. The protein resides in the nucleus. Lipid transport protein in adipocytes. Binds both long chain fatty acids and retinoic acid. Delivers long-chain fatty acids and retinoic acid to their cognate receptors in the nucleus. Has the highest binding affinity for linoleic acid and decreasing relative affinity for eicosapentaenoic acid (EPA), alpha-linolenic acid (ALA), docosahexaenoic acid (DHA), oleic acid, palmitic acid and stearic acid, respectively. The sequence is that of Fatty acid-binding protein, adipocyte from Pygoscelis papua (Gentoo penguin).